Reading from the N-terminus, the 103-residue chain is Small ribosomal subunit protein uS14c (103 aa).

The protein belongs to the universal ribosomal protein uS14 family. In terms of assembly, part of the 30S ribosomal subunit.

It is found in the plastid. The protein localises to the chloroplast. Binds 16S rRNA, required for the assembly of 30S particles. In Agrostis stolonifera (Creeping bentgrass), this protein is Small ribosomal subunit protein uS14c.